The sequence spans 184 residues: tRNA (cytidine(56)-2'-O)-methyltransferase (184 aa).

Residues Leu-87, 112–116 (GAEKV), and 130–137 (VANQPHSE) each bind S-adenosyl-L-methionine.

The protein belongs to the aTrm56 family. As to quaternary structure, homodimer.

Its subcellular location is the cytoplasm. The enzyme catalyses cytidine(56) in tRNA + S-adenosyl-L-methionine = 2'-O-methylcytidine(56) in tRNA + S-adenosyl-L-homocysteine + H(+). Specifically catalyzes the AdoMet-dependent 2'-O-ribose methylation of cytidine at position 56 in tRNAs. The polypeptide is tRNA (cytidine(56)-2'-O)-methyltransferase (Methanocorpusculum labreanum (strain ATCC 43576 / DSM 4855 / Z)).